The primary structure comprises 450 residues: Tubulin alpha chain (450 aa).

GTP is bound at residue Gln-11. Lys-40 is modified (N6-acetyllysine). Positions 71, 140, 144, 145, 179, 206, and 228 each coordinate GTP. Position 71 (Glu-71) interacts with Mg(2+). Glu-254 is a catalytic residue.

It belongs to the tubulin family. Dimer of alpha and beta chains. A typical microtubule is a hollow water-filled tube with an outer diameter of 25 nm and an inner diameter of 15 nM. Alpha-beta heterodimers associate head-to-tail to form protofilaments running lengthwise along the microtubule wall with the beta-tubulin subunit facing the microtubule plus end conferring a structural polarity. Microtubules usually have 13 protofilaments but different protofilament numbers can be found in some organisms and specialized cells. Mg(2+) serves as cofactor. Acetylation of alpha chains at Lys-40 stabilizes microtubules and affects affinity and processivity of microtubule motors. This modification has a role in multiple cellular functions, ranging from cell motility, cell cycle progression or cell differentiation to intracellular trafficking and signaling.

It is found in the cytoplasm. It localises to the cytoskeleton. It catalyses the reaction GTP + H2O = GDP + phosphate + H(+). Tubulin is the major constituent of microtubules, a cylinder consisting of laterally associated linear protofilaments composed of alpha- and beta-tubulin heterodimers. Microtubules grow by the addition of GTP-tubulin dimers to the microtubule end, where a stabilizing cap forms. Below the cap, tubulin dimers are in GDP-bound state, owing to GTPase activity of alpha-tubulin. The protein is Tubulin alpha chain of Euplotes vannus (Marine ciliate).